Consider the following 382-residue polypeptide: Lipid-A-disaccharide synthase (382 aa).

Belongs to the LpxB family.

It catalyses the reaction 2-N,3-O-bis[(3R)-3-hydroxytetradecanoyl]-alpha-D-glucosaminyl 1-phosphate + UDP-2-N,3-O-bis[(3R)-3-hydroxytetradecanoyl]-alpha-D-glucosamine = lipid A disaccharide (E. coli) + UDP + H(+). It carries out the reaction a lipid X + a UDP-2-N,3-O-bis[(3R)-3-hydroxyacyl]-alpha-D-glucosamine = a lipid A disaccharide + UDP + H(+). Its pathway is glycolipid biosynthesis; lipid IV(A) biosynthesis; lipid IV(A) from (3R)-3-hydroxytetradecanoyl-[acyl-carrier-protein] and UDP-N-acetyl-alpha-D-glucosamine: step 5/6. Its function is as follows. Condensation of UDP-2,3-diacylglucosamine and 2,3-diacylglucosamine-1-phosphate to form lipid A disaccharide, a precursor of lipid A, a phosphorylated glycolipid that anchors the lipopolysaccharide to the outer membrane of the cell. This Salmonella agona (strain SL483) protein is Lipid-A-disaccharide synthase.